Reading from the N-terminus, the 80-residue chain is DNA-binding protein HU-like (80 aa).

The protein belongs to the bacterial histone-like protein family.

In terms of biological role, histone-like DNA-binding protein which is capable of wrapping DNA to stabilize it, and thus to prevent its denaturation under extreme environmental conditions. The polypeptide is DNA-binding protein HU-like (Rickettsia prowazekii (strain Madrid E)).